We begin with the raw amino-acid sequence, 141 residues long: Lutropin subunit beta (141 aa).

The N-terminal stretch at 1 to 20 (MERLQGLLLWLLLSPSVVWA) is a signal peptide. 6 disulfides stabilise this stretch: C29–C77, C43–C92, C46–C130, C54–C108, C58–C110, and C113–C120. N-linked (GlcNAc...) asparagine glycosylation occurs at N33.

Belongs to the glycoprotein hormones subunit beta family. In terms of assembly, heterodimer of a common alpha chain and a unique beta chain which confers biological specificity to thyrotropin, lutropin, follitropin and gonadotropin.

The protein resides in the secreted. In terms of biological role, promotes spermatogenesis and ovulation by stimulating the testes and ovaries to synthesize steroids. The protein is Lutropin subunit beta (Lhb) of Rattus norvegicus (Rat).